The sequence spans 322 residues: Transcriptional activator protein Pur-alpha (322 aa).

Positions 1–55 (MADRDSGSEQGGAALGSGGSLGHPGSGSGSGGGGGGGGGGGGSGGGGGGAPGGLQ) are disordered. Position 2 is an N-acetylalanine (A2). The segment covering 9-52 (EQGGAALGSGGSLGHPGSGSGSGGGGGGGGGGGGSGGGGGGAPG) has biased composition (gly residues). The stretch at 60-125 (ELASKRVDIQ…DFIEHYAQLG (66 aa)) is one PUR repeat I repeat. Residues 142 to 213 (ALKSEFLVRE…KLIDDYGVEE (72 aa)) form a PUR repeat II repeat. The residue at position 182 (S182) is a Phosphoserine. A PUR repeat III repeat occupies 215 to 281 (PAELPEGTSL…CKYSEEMKKI (67 aa)). Over residues 295–314 (LHQQQQQQQEETAAATLLLQ) the composition is skewed to low complexity. A disordered region spans residues 295 to 322 (LHQQQQQQQEETAAATLLLQGEEEGEED).

The protein belongs to the PUR DNA-binding protein family. As to quaternary structure, homodimer, heterodimer with PURB and heterotrimer with PURB and YBX1/Y-box protein 1. Interacts with FMR1; this interaction occurs in association with polyribosome.

The protein localises to the nucleus. Functionally, this is a probable transcription activator that specifically binds the purine-rich single strand of the PUR element located upstream of the MYC gene. May play a role in the initiation of DNA replication and in recombination. The polypeptide is Transcriptional activator protein Pur-alpha (PURA) (Homo sapiens (Human)).